Here is a 146-residue protein sequence, read N- to C-terminus: Single-stranded DNA-binding protein 1-A, mitochondrial (146 aa).

Residues methionine 1–glutamine 17 constitute a mitochondrion transit peptide. The SSB domain occupies isoleucine 28–serine 140.

As to quaternary structure, homotetramer.

It localises to the mitochondrion. It is found in the mitochondrion matrix. The protein resides in the mitochondrion nucleoid. Functionally, binds preferentially and cooperatively to pyrimidine rich single-stranded DNA (ss-DNA). Required to maintain the copy number of mitochondrial DNA (mtDNA) and plays crucial roles during mtDNA replication that stimulate activity of the DNA polymerase at the replication fork. May also function in mtDNA repair. In Xenopus laevis (African clawed frog), this protein is Single-stranded DNA-binding protein 1-A, mitochondrial (ssbp1-a).